Consider the following 1142-residue polypeptide: Envelopment polyprotein (1142 aa).

An N-terminal signal peptide occupies residues 1 to 21; it reads MSKFCLCLSLLGVLLLQVCDT. The Lumenal portion of the chain corresponds to 22–489; sequence RSLLELKIEC…LCVPGIHGWS (468 aa). 6 disulfide bridges follow: Cys31–Cys156, Cys65–Cys162, Cys114–Cys133, Cys138–Cys143, Cys180–Cys190, and Cys215–Cys253. Residue Asn139 is glycosylated (N-linked (GlcNAc...) asparagine; by host). An N-linked (GlcNAc...) asparagine; by host glycan is attached at Asn353. Cystine bridges form between Cys382-Cys441, Cys386-Cys395, Cys411-Cys430, and Cys458-Cys481. An N-linked (GlcNAc...) asparagine; by host glycan is attached at Asn405. A helical membrane pass occupies residues 490 to 510; it reads TIALLATFCFGWLLIPIISLV. Residues 511–633 are Cytoplasmic-facing; sequence SIKIMLLFAY…LSVFRYRSRC (123 aa). Residues 522 to 539 form a binding to the ribonucleoprotein region; sequence CSKYSNDSKFRLLIEKVK. 2 consecutive CCHC-type zinc fingers follow at residues 551-571 and 576-597; these read CEVC…KKSC and CPYC…FKVC. Binding to the ribonucleoprotein regions lie at residues 594–611, 598–609, and 617–631; these read FKVC…RKSL, KLTTRFQENLRK, and KRGC…RYRS. Residues 617–640 enclose the ITAM domain; that stretch reads KRGCYRTLSVFRYRSRCFVGLVWC. A YxxL motif is present at residues 621–624; it reads YRTL. Residues 634-654 traverse the membrane as a helical segment; it reads FVGLVWCILLVLELVIWAASA. The Lumenal portion of the chain corresponds to 655 to 1110; that stretch reads DTVEIKTGWT…EWLMGILSGN (456 aa). Disulfide bonds link Cys741-Cys776, Cys745-Cys783, Cys757-Cys890, Cys771-Cys901, Cys786-Cys909, Cys812-Cys821, Cys829-Cys838, and Cys869-Cys873. The interval 763 to 783 is fusion loop; it reads YEFETGWGCNPGDCPGVGTGC. N-linked (GlcNAc...) asparagine; by host glycosylation occurs at Asn933. 5 disulfides stabilise this stretch: Cys975–Cys1005, Cys998–Cys1050, Cys1015–Cys1020, Cys1051–Cys1056, and Cys1090–Cys1094. The helical transmembrane segment at 1111–1131 threads the bilayer; sequence WMVVAVLVVLLILSIFLFSLC. Residues 1127–1142 are binding to the ribonucleoprotein; it reads LFSLCCPRRVVHKKSS. The Cytoplasmic portion of the chain corresponds to 1132–1142; sequence CPRRVVHKKSS.

Belongs to the hantavirus envelope glycoprotein family. In terms of assembly, homodimer. Homotetramer; forms heterotetrameric Gn-Gc spikes in the pre-fusion conformation. Interacts (via C-terminus) with the nucleoprotein. Interacts with host TUFM; this interaction contributes to the virus-induced degradation of mitochondria by autophagy, which leads to degradation of host MAVS and inhibition of type I interferon (IFN) responses. Interacts with host MAP1LC3B; this interaction contributes to the virus-induced degradation of mitochondria by autophagy, which leads to degradation of host MAVS and inhibition of type I interferon (IFN) responses. Homodimer. Homotetramer; forms heterotetrameric Gn-Gc spikes in the pre-fusion conformation. Homotrimer; forms homotrimer in the post-fusion conformation at acidic pH. Interacts (via C-terminus) with the nucleoprotein. In terms of processing, envelope polyprotein precursor is quickly cleaved in vivo just after synthesis, presumably by host signal peptidase.

It is found in the virion membrane. It localises to the host cell surface. The protein resides in the host Golgi apparatus membrane. The protein localises to the host endoplasmic reticulum membrane. Its subcellular location is the host mitochondrion. Its function is as follows. Forms homotetramers with glycoprotein C at the surface of the virion. Attaches the virion to host cell receptors including integrin alpha5/ITGB1. This attachment induces virion internalization predominantly through clathrin-dependent endocytosis. Mediates the assembly and budding of infectious virus particles through its interaction with the nucleocapsid protein and the viral genome. May dysregulate normal immune and endothelial cell responses through an ITAM motif. Translocates to mitochondria, binds to host TUFM and recruits MAP1LC3B. These interactions induce mitochondrial autophagy and therefore destruction of host MAVS leading to inhibition of type I interferon (IFN) responses. Concomitant breakdown of glycoprotein N is apparently prevented by the nucleoprotein that may inhibit Gn-stimulated autophagosome-lysosome fusion. Interacts with the viral genomic RNA. Functionally, forms homotetramers with glycoprotein N at the surface of the virion. Attaches the virion to host cell receptors including integrin ITGAV/ITGB3. This attachment induces virion internalization predominantly through clathrin-dependent endocytosis. Class II fusion protein that promotes fusion of viral membrane with host endosomal membrane after endocytosis of the virion. The chain is Envelopment polyprotein (GP) from Microtus pennsylvanicus (Meadow vole).